The chain runs to 455 residues: Bifunctional protein GlmU (455 aa).

The interval 1-229 (MLNSAMSVVI…ISETEGVNNR (229 aa)) is pyrophosphorylase. Residues 11 to 14 (LAAG), Lys25, Gln76, 81 to 82 (GT), 103 to 105 (YGD), Gly140, Glu154, Asn169, and Asn227 contribute to the UDP-N-acetyl-alpha-D-glucosamine site. Residue Asp105 participates in Mg(2+) binding. Position 227 (Asn227) interacts with Mg(2+). The linker stretch occupies residues 230 to 250 (LQLSRLERIYQAEQAEKLLLA). The interval 251–455 (GVMLRDPARF…KQGWQRPVKK (205 aa)) is N-acetyltransferase. Residues Arg333 and Lys351 each coordinate UDP-N-acetyl-alpha-D-glucosamine. Residue His363 is the Proton acceptor of the active site. 2 residues coordinate UDP-N-acetyl-alpha-D-glucosamine: Tyr366 and Asn377. Acetyl-CoA contacts are provided by residues Ala380, 386 to 387 (NY), Ser405, Ala423, and Arg440.

The protein in the N-terminal section; belongs to the N-acetylglucosamine-1-phosphate uridyltransferase family. This sequence in the C-terminal section; belongs to the transferase hexapeptide repeat family. In terms of assembly, homotrimer. Mg(2+) is required as a cofactor.

The protein localises to the cytoplasm. The enzyme catalyses alpha-D-glucosamine 1-phosphate + acetyl-CoA = N-acetyl-alpha-D-glucosamine 1-phosphate + CoA + H(+). It carries out the reaction N-acetyl-alpha-D-glucosamine 1-phosphate + UTP + H(+) = UDP-N-acetyl-alpha-D-glucosamine + diphosphate. The protein operates within nucleotide-sugar biosynthesis; UDP-N-acetyl-alpha-D-glucosamine biosynthesis; N-acetyl-alpha-D-glucosamine 1-phosphate from alpha-D-glucosamine 6-phosphate (route II): step 2/2. It functions in the pathway nucleotide-sugar biosynthesis; UDP-N-acetyl-alpha-D-glucosamine biosynthesis; UDP-N-acetyl-alpha-D-glucosamine from N-acetyl-alpha-D-glucosamine 1-phosphate: step 1/1. It participates in bacterial outer membrane biogenesis; LPS lipid A biosynthesis. Its function is as follows. Catalyzes the last two sequential reactions in the de novo biosynthetic pathway for UDP-N-acetylglucosamine (UDP-GlcNAc). The C-terminal domain catalyzes the transfer of acetyl group from acetyl coenzyme A to glucosamine-1-phosphate (GlcN-1-P) to produce N-acetylglucosamine-1-phosphate (GlcNAc-1-P), which is converted into UDP-GlcNAc by the transfer of uridine 5-monophosphate (from uridine 5-triphosphate), a reaction catalyzed by the N-terminal domain. The protein is Bifunctional protein GlmU of Salmonella arizonae (strain ATCC BAA-731 / CDC346-86 / RSK2980).